A 397-amino-acid polypeptide reads, in one-letter code: Alpha-2B adrenergic receptor (397 aa).

The helical transmembrane segment at 1 to 25 (AIAAIIIFLILFTIFGNALVILAVL) threads the bilayer. The Cytoplasmic segment spans residues 26–36 (TSRSLRAPQNL). A helical membrane pass occupies residues 37–62 (FLVSLAAADILVATLIIPFSLANELL). The Extracellular segment spans residues 63–72 (GYWYFRRMWC). Cys-72 and Cys-151 are joined by a disulfide. A helical membrane pass occupies residues 73 to 95 (KVYLALDVLFCTSSIVHLCAISL). Over 96–117 (DRYWAVSRALEYNSKRTPRRIK) the chain is Cytoplasmic. Residues 118–140 (CIILMVWLIAAVISLPSLVYKGD) traverse the membrane as a helical segment. The Extracellular segment spans residues 141 to 156 (QGPQPSGAPQCNLNQE). The chain crosses the membrane as a helical span at residues 157 to 180 (TWYILASSIGSFFAPCLIMILVYL). The Cytoplasmic segment spans residues 181–361 (RIYLIAKRSH…LSREKRFTFV (181 aa)). Disordered stretches follow at residues 193–212 (GPRA…RQVP) and 230–319 (AAGE…LQQP). Acidic residues predominate over residues 280–300 (SLEEEAEEEEEGEEEREEECE). A compositionally biased stretch (low complexity) spans 301–319 (PQALPASPASACSPPLQQP). Residues 362–385 (LAVVIGVFVLCWFPFFFSYSLGAI) traverse the membrane as a helical segment. At 386 to 394 (CPQQCKVPH) the chain is on the extracellular side. A helical transmembrane segment spans residues 395-397 (DLF).

Belongs to the G-protein coupled receptor 1 family. Adrenergic receptor subfamily. ADRA2B sub-subfamily. As to quaternary structure, interacts with RAB26. Interacts with PPP1R9B.

It is found in the cell membrane. Its function is as follows. Alpha-2 adrenergic receptors mediate the catecholamine-induced inhibition of adenylate cyclase through the action of G proteins. This chain is Alpha-2B adrenergic receptor (ADRA2B), found in Talpa europaea (European mole).